The sequence spans 276 residues: 2-dehydro-3-deoxyphosphooctonate aldolase (276 aa).

The protein belongs to the KdsA family.

The protein resides in the cytoplasm. The catalysed reaction is D-arabinose 5-phosphate + phosphoenolpyruvate + H2O = 3-deoxy-alpha-D-manno-2-octulosonate-8-phosphate + phosphate. It functions in the pathway carbohydrate biosynthesis; 3-deoxy-D-manno-octulosonate biosynthesis; 3-deoxy-D-manno-octulosonate from D-ribulose 5-phosphate: step 2/3. Its pathway is bacterial outer membrane biogenesis; lipopolysaccharide biosynthesis. The chain is 2-dehydro-3-deoxyphosphooctonate aldolase from Helicobacter pylori (strain HPAG1).